The primary structure comprises 293 residues: Ribosomal protein L11 methyltransferase (293 aa).

S-adenosyl-L-methionine is bound by residues T145, G166, D188, and N230.

It belongs to the methyltransferase superfamily. PrmA family.

The protein localises to the cytoplasm. The catalysed reaction is L-lysyl-[protein] + 3 S-adenosyl-L-methionine = N(6),N(6),N(6)-trimethyl-L-lysyl-[protein] + 3 S-adenosyl-L-homocysteine + 3 H(+). Its function is as follows. Methylates ribosomal protein L11. This is Ribosomal protein L11 methyltransferase from Salmonella heidelberg (strain SL476).